The following is a 487-amino-acid chain: Pentatricopeptide repeat-containing protein At5g61370, mitochondrial (487 aa).

A mitochondrion-targeting transit peptide spans 1-90 (MMSTTVRLNR…TSPRRLLRFF (90 aa)). PPR repeat units lie at residues 137 to 171 (DKQTFSIVAETLVKVGKEEDAIGIFKILDKFSCPQ), 172 to 202 (DGFTVTAIISALCSRGHVKRALGVMHHHKDV), 207 to 241 (ELSVYRSLLFGWSVQRNVKEARRVIQDMKSAGITP), 242 to 283 (DLFC…KIQP), 284 to 318 (TSMSYNILLSCLGRTRRVRESCQILEQMKRSGCDP), 319 to 353 (DTGSYYFVVRVLYLTGRFGKGNQIVDEMIERGFRP), 354 to 388 (ERKFYYDLIGVLCGVERVNFALQLFEKMKRSSVGG), and 389 to 423 (YGQVYDLLIPKLCKGGNFEKGRELWEEALSIDVTL). The interval 466-487 (TKPKLKLKPKRRSKTKKKNLQH) is disordered.

This sequence belongs to the PPR family. P subfamily.

The protein localises to the mitochondrion. In Arabidopsis thaliana (Mouse-ear cress), this protein is Pentatricopeptide repeat-containing protein At5g61370, mitochondrial.